The primary structure comprises 408 residues: uncharacterized protein (408 aa).

4Fe-4S ferredoxin-type domains lie at 42 to 72 (IPPI…MIYN), 78 to 107 (KLPV…MDKH), 122 to 151 (SNLI…RKEG), 151 to 181 (GKYV…VVDE), 212 to 241 (KIPH…NEKK), 233 to 265 (GEID…IYKP), 273 to 302 (ICYV…ISKE), and 304 to 333 (KLPY…VVKP). The [4Fe-4S] cluster site is built by C52, C55, C58, C62, C87, C90, C93, C97, C131, C134, C137, C141, C160, C163, C166, and C170. Residues C282, C285, C288, and C292 each coordinate [4Fe-4S] cluster.

This is an uncharacterized protein from Methanocaldococcus jannaschii (strain ATCC 43067 / DSM 2661 / JAL-1 / JCM 10045 / NBRC 100440) (Methanococcus jannaschii).